The following is a 246-amino-acid chain: Mast cell protease 9 (246 aa).

The N-terminal stretch at 1 to 18 (MQALLFLMALLLPSRAGA) is a signal peptide. The propeptide at 19–20 (EE) is activation peptide. A Peptidase S1 domain is found at 21–244 (IIGGVESEPH…HVPWINRVIK (224 aa)). Residues Cys50 and Cys66 are joined by a disulfide bond. Active-site charge relay system residues include His65 and Asp109. 2 cysteine pairs are disulfide-bonded: Cys143–Cys208 and Cys174–Cys187. Ser202 functions as the Charge relay system in the catalytic mechanism.

The protein belongs to the peptidase S1 family. Granzyme subfamily. Selectively expressed in uterine mast cells.

The protein is Mast cell protease 9 (Mcpt9) of Mus musculus (Mouse).